Consider the following 773-residue polypeptide: Lon protease homolog 2, peroxisomal (773 aa).

The Lon N-terminal domain maps to 9–198 (LPVILVTSGV…MCIKWMNEKK (190 aa)). ATP is bound at residue 336-343 (GPPGIGKT). The 180-residue stretch at 587 to 766 (PLPAGVCFGL…EDVIGAMMDK (180 aa)) folds into the Lon proteolytic domain. Residues Ser672 and Lys715 contribute to the active site. Residues 771 to 773 (AKL) carry the Microbody targeting signal motif.

The protein belongs to the peptidase S16 family.

It localises to the peroxisome matrix. It carries out the reaction Hydrolysis of proteins in presence of ATP.. In terms of biological role, ATP-dependent serine protease that mediates the selective degradation of misfolded and unassembled polypeptides in the peroxisomal matrix. Necessary for type 2 peroxisome targeting signal (PTS2)-containing protein processing and facilitates peroxisome matrix protein import. The polypeptide is Lon protease homolog 2, peroxisomal (Caenorhabditis elegans).